A 368-amino-acid chain; its full sequence is RNA polymerase sigma factor SigA (368 aa).

Residues 60-86 (VVDENGDPSEHSLKKDEKEAEKAQAED) form a disordered region. The span at 67–84 (PSEHSLKKDEKEAEKAQA) shows a compositional bias: basic and acidic residues. Residues 135–205 (LAEANLRLVV…TRAIADQART (71 aa)) form a sigma-70 factor domain-2 region. Residues 159 to 162 (DLIQ) carry the Interaction with polymerase core subunit RpoC motif. Residues 214-290 (ETINKLIRIQ…DQDATSPAEH (77 aa)) are sigma-70 factor domain-3. The segment at 303–356 (VLDTLTDREENVLRLRFGLDDGRTRTLEEVGKVFGVTRERIRQIEAKALRKLRH) is sigma-70 factor domain-4. Residues 329 to 348 (LEEVGKVFGVTRERIRQIEA) constitute a DNA-binding region (H-T-H motif).

The protein belongs to the sigma-70 factor family. RpoD/SigA subfamily. As to quaternary structure, interacts transiently with the RNA polymerase catalytic core.

The protein resides in the cytoplasm. In terms of biological role, sigma factors are initiation factors that promote the attachment of RNA polymerase to specific initiation sites and are then released. This sigma factor is the primary sigma factor during exponential growth. The polypeptide is RNA polymerase sigma factor SigA (Enterococcus faecalis (strain ATCC 700802 / V583)).